The primary structure comprises 356 residues: Anthranilate phosphoribosyltransferase (356 aa).

5-phospho-alpha-D-ribose 1-diphosphate is bound by residues glycine 96, 99 to 100 (GD), threonine 104, 106 to 109 (NIST), 124 to 132 (KHGNRSASG), and serine 136. Glycine 96 contacts anthranilate. Residue serine 108 participates in Mg(2+) binding. Asparagine 127 contacts anthranilate. Arginine 182 is an anthranilate binding site. Mg(2+) contacts are provided by aspartate 241 and glutamate 242.

The protein belongs to the anthranilate phosphoribosyltransferase family. As to quaternary structure, homodimer. It depends on Mg(2+) as a cofactor.

The enzyme catalyses N-(5-phospho-beta-D-ribosyl)anthranilate + diphosphate = 5-phospho-alpha-D-ribose 1-diphosphate + anthranilate. The protein operates within amino-acid biosynthesis; L-tryptophan biosynthesis; L-tryptophan from chorismate: step 2/5. Functionally, catalyzes the transfer of the phosphoribosyl group of 5-phosphorylribose-1-pyrophosphate (PRPP) to anthranilate to yield N-(5'-phosphoribosyl)-anthranilate (PRA). The chain is Anthranilate phosphoribosyltransferase from Trichodesmium erythraeum (strain IMS101).